Consider the following 201-residue polypeptide: Imidazoleglycerol-phosphate dehydratase (201 aa).

This sequence belongs to the imidazoleglycerol-phosphate dehydratase family.

It is found in the cytoplasm. It catalyses the reaction D-erythro-1-(imidazol-4-yl)glycerol 3-phosphate = 3-(imidazol-4-yl)-2-oxopropyl phosphate + H2O. Its pathway is amino-acid biosynthesis; L-histidine biosynthesis; L-histidine from 5-phospho-alpha-D-ribose 1-diphosphate: step 6/9. This Prochlorococcus marinus (strain MIT 9301) protein is Imidazoleglycerol-phosphate dehydratase.